We begin with the raw amino-acid sequence, 744 residues long: CCR4-NOT transcription complex subunit 10 (744 aa).

The segment covering 1–16 (MAADKPADQGAEKHEG) has biased composition (basic and acidic residues). The segment at 1 to 25 (MAADKPADQGAEKHEGTGQSSGITD) is disordered. Ala-2 bears the N-acetylalanine mark. A coiled-coil region spans residues 74 to 107 (KSNQTTTDNLRQTLNQLKNQVHSAVEEMDGLDDV). Residues 183–199 (NNNKNGKNETGNNNNKD) show a composition bias toward low complexity. Disordered regions lie at residues 183–204 (NNNK…SNHK), 477–521 (QDPK…PPSS), and 602–634 (VSLG…PQCY). The span at 484–495 (GAKNSNQLGGNT) shows a compositional bias: polar residues. Low complexity predominate over residues 496-506 (ESSESSETCSS). The segment covering 602-612 (VSLGISSNEQD) has biased composition (polar residues).

Belongs to the CNOT10 family. In terms of assembly, component of the CCR4-NOT complex; distinct complexes seem to exist that differ in the participation of probably mutually exclusive catalytic subunits. CNOT10 and CNOT11 form a subcomplex docked to the CNOT1 scaffold.

It localises to the cytoplasm. It is found in the nucleus. In terms of biological role, component of the CCR4-NOT complex which is one of the major cellular mRNA deadenylases and is linked to various cellular processes including bulk mRNA degradation, miRNA-mediated repression, translational repression during translational initiation and general transcription regulation. Additional complex functions may be a consequence of its influence on mRNA expression. Is not required for association of CNOT7 to the CCR4-NOT complex. This Homo sapiens (Human) protein is CCR4-NOT transcription complex subunit 10 (CNOT10).